Consider the following 287-residue polypeptide: Phosphatidylserine decarboxylase proenzyme (287 aa).

Catalysis depends on charge relay system; for autoendoproteolytic cleavage activity residues Asp90, His147, and Ser253. Ser253 (schiff-base intermediate with substrate; via pyruvic acid; for decarboxylase activity) is an active-site residue. Position 253 is a pyruvic acid (Ser); by autocatalysis (Ser253).

Belongs to the phosphatidylserine decarboxylase family. PSD-B subfamily. Prokaryotic type I sub-subfamily. In terms of assembly, heterodimer of a large membrane-associated beta subunit and a small pyruvoyl-containing alpha subunit. Requires pyruvate as cofactor. Post-translationally, is synthesized initially as an inactive proenzyme. Formation of the active enzyme involves a self-maturation process in which the active site pyruvoyl group is generated from an internal serine residue via an autocatalytic post-translational modification. Two non-identical subunits are generated from the proenzyme in this reaction, and the pyruvate is formed at the N-terminus of the alpha chain, which is derived from the carboxyl end of the proenzyme. The autoendoproteolytic cleavage occurs by a canonical serine protease mechanism, in which the side chain hydroxyl group of the serine supplies its oxygen atom to form the C-terminus of the beta chain, while the remainder of the serine residue undergoes an oxidative deamination to produce ammonia and the pyruvoyl prosthetic group on the alpha chain. During this reaction, the Ser that is part of the protease active site of the proenzyme becomes the pyruvoyl prosthetic group, which constitutes an essential element of the active site of the mature decarboxylase.

The protein resides in the cell membrane. The catalysed reaction is a 1,2-diacyl-sn-glycero-3-phospho-L-serine + H(+) = a 1,2-diacyl-sn-glycero-3-phosphoethanolamine + CO2. The protein operates within phospholipid metabolism; phosphatidylethanolamine biosynthesis; phosphatidylethanolamine from CDP-diacylglycerol: step 2/2. Catalyzes the formation of phosphatidylethanolamine (PtdEtn) from phosphatidylserine (PtdSer). The sequence is that of Phosphatidylserine decarboxylase proenzyme from Aliivibrio fischeri (strain ATCC 700601 / ES114) (Vibrio fischeri).